Consider the following 194-residue polypeptide: Adenylate kinase isoenzyme 1 (194 aa).

An ATP-binding site is contributed by 19-24; it reads GSGKGT. The tract at residues 39-68 is NMP; sequence STGDLLRAEVSSGSERGKKLQAIMEKGELV. AMP contacts are provided by residues threonine 40, arginine 45, 66-68, 95-98, and glutamine 102; these read ELV and GYPR. The segment at 132-142 is LID; sequence KRGETSGRVDD. Residue arginine 133 participates in ATP binding. Arginine 139 and arginine 150 together coordinate AMP. Glycine 178 contacts ATP.

The protein belongs to the adenylate kinase family. AK1 subfamily. As to quaternary structure, monomer. Requires Mg(2+) as cofactor. As to expression, skeletal muscle.

It is found in the cytoplasm. It carries out the reaction a ribonucleoside 5'-phosphate + ATP = a ribonucleoside 5'-diphosphate + ADP. The enzyme catalyses AMP + ATP = 2 ADP. The catalysed reaction is dAMP + ATP = dADP + ADP. It catalyses the reaction dATP + AMP = dADP + ADP. It carries out the reaction dAMP + dATP = 2 dADP. The enzyme catalyses a 2'-deoxyribonucleoside 5'-diphosphate + ATP = a 2'-deoxyribonucleoside 5'-triphosphate + ADP. The catalysed reaction is a ribonucleoside 5'-diphosphate + ATP = a ribonucleoside 5'-triphosphate + ADP. It catalyses the reaction CDP + GTP = CTP + GDP. It carries out the reaction GDP + ATP = GTP + ADP. The enzyme catalyses UDP + ATP = UTP + ADP. The catalysed reaction is GTP + UDP = UTP + GDP. It catalyses the reaction dTDP + GTP = dTTP + GDP. It carries out the reaction dCDP + GTP = dCTP + GDP. The enzyme catalyses dGDP + ATP = dGTP + ADP. The catalysed reaction is dADP + GTP = dATP + GDP. It catalyses the reaction thiamine diphosphate + ADP = thiamine triphosphate + AMP. In terms of biological role, catalyzes the reversible transfer of the terminal phosphate group between ATP and AMP. Also displays broad nucleoside diphosphate kinase activity. Plays an important role in cellular energy homeostasis and in adenine nucleotide metabolism. Also catalyzes at a very low rate the synthesis of thiamine triphosphate (ThTP) from thiamine diphosphate (ThDP) and ADP. This chain is Adenylate kinase isoenzyme 1, found in Gallus gallus (Chicken).